Reading from the N-terminus, the 527-residue chain is Metal transporter Nramp6 (527 aa).

Transmembrane regions (helical) follow at residues 38 to 58, 71 to 91, 115 to 135, 143 to 163, 173 to 193, 221 to 241, 264 to 284, 321 to 341, 364 to 384, 385 to 405, 427 to 447, and 458 to 478; these read FFSY…PGNF, ELLW…SLAA, FMLW…EVIG, LFNI…LILL, LEFL…VELH, ISLL…ALVL, GLAL…SGAV, LFAI…TYAG, CLAI…GAGK, LIII…VPLL, TWII…SSFI, and VAIV…LAAI.

It belongs to the NRAMP (TC 2.A.55) family. In terms of tissue distribution, expressed in the vascular bundles of shoots, cotyledons, young leaves, sepals and petals, at the top of the flower stem and in the style. Expressed in the peduncle of developing siliques as well as in the septum and the funiculi.

The protein resides in the endomembrane system. Probable intracellular cadmium (Cd) transporter that participates in the distribution or availability of Cd within the cell. This chain is Metal transporter Nramp6 (NRAMP6), found in Arabidopsis thaliana (Mouse-ear cress).